The primary structure comprises 260 residues: HTH-type transcriptional repressor NanR (260 aa).

The 69-residue stretch at 27 to 95 (KKLSDMVEEE…NGERARVSMP (69 aa)) folds into the HTH gntR-type domain. Positions 55-74 (ERELMEFFNVGRPSVREALA) form a DNA-binding region, H-T-H motif.

The protein belongs to the NanR family.

Its function is as follows. Transcriptional repressor that controls expression of the genes required for the catabolism of sialic acids. In Enterobacter sp. (strain 638), this protein is HTH-type transcriptional repressor NanR.